We begin with the raw amino-acid sequence, 700 residues long: Elongation factor G (700 aa).

The tr-type G domain maps to 8–290 (ERYRNIGISA…AVIDYLPSPV (283 aa)). GTP contacts are provided by residues 17 to 24 (AHIDAGKT), 88 to 92 (DTPGH), and 142 to 145 (NKMD).

Belongs to the TRAFAC class translation factor GTPase superfamily. Classic translation factor GTPase family. EF-G/EF-2 subfamily.

It localises to the cytoplasm. In terms of biological role, catalyzes the GTP-dependent ribosomal translocation step during translation elongation. During this step, the ribosome changes from the pre-translocational (PRE) to the post-translocational (POST) state as the newly formed A-site-bound peptidyl-tRNA and P-site-bound deacylated tRNA move to the P and E sites, respectively. Catalyzes the coordinated movement of the two tRNA molecules, the mRNA and conformational changes in the ribosome. This Leptothrix cholodnii (strain ATCC 51168 / LMG 8142 / SP-6) (Leptothrix discophora (strain SP-6)) protein is Elongation factor G.